The following is a 556-amino-acid chain: Polypeptide N-acetylgalactosaminyltransferase 13 (556 aa).

Topologically, residues 1-4 (MRRF) are cytoplasmic. The chain crosses the membrane as a helical; Signal-anchor for type II membrane protein span at residues 5 to 27 (VYCKVVLATSLMWVLVDVFLLLY). Topologically, residues 28-556 (FSECNKCDDK…WLLRNMTLGT (529 aa)) are lumenal. Residues asparagine 94 and asparagine 116 are each glycosylated (N-linked (GlcNAc...) asparagine). Disulfide bonds link cysteine 105–cysteine 338, cysteine 329–cysteine 407, cysteine 441–cysteine 458, cysteine 481–cysteine 496, and cysteine 522–cysteine 539. The interval 114–224 (LPNTSVVIVF…LGWLEPLLAR (111 aa)) is catalytic subdomain A. Substrate-binding residues include aspartate 155 and arginine 185. Mn(2+)-binding residues include aspartate 208 and histidine 210. A catalytic subdomain B region spans residues 284–346 (PVRTPTMAGG…TCSHVGHVFR (63 aa)). Tryptophan 315 is a binding site for substrate. Position 343 (histidine 343) interacts with Mn(2+). 2 residues coordinate substrate: arginine 346 and tyrosine 351. The Ricin B-type lectin domain occupies 428-550 (YSLGEIRNVE…GSRSQQWLLR (123 aa)). Asparagine 551 is a glycosylation site (N-linked (GlcNAc...) asparagine).

It belongs to the glycosyltransferase 2 family. GalNAc-T subfamily. Mn(2+) is required as a cofactor. In terms of tissue distribution, specifically expressed in neuronal cells. Expressed in fetal brain, whole adult brain, cerebral cortex and cerebellum. Not expressed in other tissues tested.

Its subcellular location is the golgi apparatus membrane. It carries out the reaction L-seryl-[protein] + UDP-N-acetyl-alpha-D-galactosamine = a 3-O-[N-acetyl-alpha-D-galactosaminyl]-L-seryl-[protein] + UDP + H(+). It catalyses the reaction L-threonyl-[protein] + UDP-N-acetyl-alpha-D-galactosamine = a 3-O-[N-acetyl-alpha-D-galactosaminyl]-L-threonyl-[protein] + UDP + H(+). It functions in the pathway protein modification; protein glycosylation. Its function is as follows. Catalyzes the initial reaction in O-linked oligosaccharide biosynthesis, the transfer of an N-acetyl-D-galactosamine (GalNAc) residue from UDP-GalNAc to a serine or threonine residue on the protein receptor. Generates GalNAc-O-Ser/Thr structure also known as Tn antigen, which itself is immunogenic but also serves as a precursor for the synthesis of different mucin-type O-glycan core structures. Contributes to the synthesis of O-linked glycans on mucins and proteoglycans of the central nervous system. May promote neurogenesis through glycosylation and stabilization of PDPN. Can glycosylate both unmodified peptides and glycopeptides that already contain an O-linked GalNAc sugar. Transfers GalNAc to Thr-/Ser-rich tandem repeats GTTPSPVPTTSTTSAP of MUC5AC, specifically on Thr-3 of non-glycosylated MUC5AC peptide, on Thr-12 and Thr-13 of preglycosylated MUC5AC at Thr-3 (MUC5AC-3), on Thr-3 of preglycosylated MUC5AC at Thr-13 (MUC5AC-13) and on Thr-12 of preglycosylated MUC5AC at Thr-3 and Thr-13 (MUC5AC-3,13). Transfers GalNAc to three consecutive serine/threonine residues on SDC3 forming a triplet-Tn epitope expressed in Purkinje cells of the developing brain. In terms of biological role, can glycosylate both unmodified peptides and glycopeptides that already contain an O-linked GalNAc sugar. Transfers GalNAc to Thr-/Ser-rich tandem repeats GTTPSPVPTTSTTSAP of MUC5AC, specifically on Thr-3 of non-glycosylated MUC5AC peptide, on Thr-12 and Thr-13 of preglycosylated MUC5AC at Thr-3 (MUC5AC-3), on Thr-3 of preglycosylated MUC5AC at Thr-13 (MUC5AC-13) and on Thr-12 of preglycosylated MUC5AC at Thr-3 and Thr-13 (MUC5AC-3,13). In Homo sapiens (Human), this protein is Polypeptide N-acetylgalactosaminyltransferase 13 (GALNT13).